A 38-amino-acid polypeptide reads, in one-letter code: uncharacterized protein (38 aa).

This is an uncharacterized protein from Haemophilus influenzae (strain ATCC 51907 / DSM 11121 / KW20 / Rd).